We begin with the raw amino-acid sequence, 291 residues long: Polyamine aminopropyltransferase (291 aa).

One can recognise a PABS domain in the interval 5–245 (PGPIVLMEPL…YAVNFVLGSL (241 aa)). S-methyl-5'-thioadenosine is bound at residue Gln36. Spermidine is bound by residues His67 and Glu91. Residues Asp111 and 143 to 144 (DG) contribute to the S-methyl-5'-thioadenosine site. The Proton acceptor role is filled by Asp164.

The protein belongs to the spermidine/spermine synthase family. Homodimer or homotetramer.

It is found in the cytoplasm. The catalysed reaction is norspermidine + S-adenosyl 3-(methylsulfanyl)propylamine = norspermine + S-methyl-5'-thioadenosine + H(+). It catalyses the reaction S-adenosyl 3-(methylsulfanyl)propylamine + spermidine = thermospermine + S-methyl-5'-thioadenosine + H(+). Functionally, involved in the biosynthesis of polyamines which are thought to support the growth of thermophilic microorganisms under high-temperature conditions. It seems that long-chain and branched-chain of polyamines effectively stabilize DNA and RNA, respectively. Catalyzes the irreversible transfer of a propylamine group from the amino donor S-adenosylmethioninamine (decarboxy-AdoMet) to norspermidine and 1,3-diaminopropane to yield norspermine, and to spermidine to yield thermospermine. It can also synthesize thermospermine from putrescine (1,4-diaminobutane) and caldopentamine from norspermine with a very low activity. The biosynthesis of caldohexamine and caldoheptamine from caldopentamine has been also observed. The chain is Polyamine aminopropyltransferase from Pyrobaculum aerophilum (strain ATCC 51768 / DSM 7523 / JCM 9630 / CIP 104966 / NBRC 100827 / IM2).